The primary structure comprises 244 residues: 7-cyano-7-deazaguanine synthase (244 aa).

Position 14–24 (14–24 (FSGGQDSATCV)) interacts with ATP. Zn(2+) is bound by residues Cys202, Cys217, Cys220, and Cys223.

This sequence belongs to the QueC family. The cofactor is Zn(2+).

The enzyme catalyses 7-carboxy-7-deazaguanine + NH4(+) + ATP = 7-cyano-7-deazaguanine + ADP + phosphate + H2O + H(+). It participates in purine metabolism; 7-cyano-7-deazaguanine biosynthesis. In terms of biological role, catalyzes the ATP-dependent conversion of 7-carboxy-7-deazaguanine (CDG) to 7-cyano-7-deazaguanine (preQ(0)). This Burkholderia multivorans (strain ATCC 17616 / 249) protein is 7-cyano-7-deazaguanine synthase.